The primary structure comprises 184 residues: Adenine phosphoribosyltransferase (184 aa).

Belongs to the purine/pyrimidine phosphoribosyltransferase family. Homodimer.

Its subcellular location is the cytoplasm. It carries out the reaction AMP + diphosphate = 5-phospho-alpha-D-ribose 1-diphosphate + adenine. The protein operates within purine metabolism; AMP biosynthesis via salvage pathway; AMP from adenine: step 1/1. Catalyzes a salvage reaction resulting in the formation of AMP, that is energically less costly than de novo synthesis. The polypeptide is Adenine phosphoribosyltransferase (Corynebacterium diphtheriae (strain ATCC 700971 / NCTC 13129 / Biotype gravis)).